Reading from the N-terminus, the 99-residue chain is DNA/RNA-binding protein Alba 1 (99 aa).

An N6-acetyllysine modification is found at Lys-17.

It belongs to the histone-like Alba family. Post-translationally, acetylated. Acetylation at Lys-17 decreases DNA-binding affinity.

The protein localises to the cytoplasm. The protein resides in the chromosome. Functionally, binds double-stranded DNA tightly but without sequence specificity. Involved in DNA compaction. The chain is DNA/RNA-binding protein Alba 1 from Sulfurisphaera tokodaii (strain DSM 16993 / JCM 10545 / NBRC 100140 / 7) (Sulfolobus tokodaii).